The following is a 565-amino-acid chain: Ubiquitin carboxyl-terminal hydrolase 21 (565 aa).

Basic and acidic residues-rich tracts occupy residues 1–14 (MPQA…RTRE) and 58–70 (PPDE…DLGR). The disordered stretch occupies residues 1-128 (MPQASEHRLG…LRPMGIALGG (128 aa)). A compositionally biased stretch (low complexity) spans 71 to 81 (GRTSGSRPRGP). Residues 104-116 (SRTNLTRSKSVSS) show a composition bias toward polar residues. A Nuclear export signal motif is present at residues 134 to 152 (ELGAALSRLALRPEPPTLR). Residues 212 to 558 (VGLRNLGNTC…EGYVLFYQLM (347 aa)) form the USP domain. Residue Cys-221 is the Nucleophile of the active site. Residues 324-347 (APPILASGPVPSPPRRGGALHEEP) are disordered. Residues Cys-384, Cys-387, Cys-437, and Cys-440 each contribute to the Zn(2+) site. The active-site Proton acceptor is His-518.

Belongs to the peptidase C19 family. USP21 subfamily. As to quaternary structure, interacts with BEND3.

The protein resides in the cytoplasm. It localises to the nucleus. It carries out the reaction Thiol-dependent hydrolysis of ester, thioester, amide, peptide and isopeptide bonds formed by the C-terminal Gly of ubiquitin (a 76-residue protein attached to proteins as an intracellular targeting signal).. In terms of biological role, deubiquitinates histone H2A, a specific tag for epigenetic transcriptional repression, thereby acting as a coactivator. Deubiquitination of histone H2A releaves the repression of di- and trimethylation of histone H3 at 'Lys-4', resulting in regulation of transcriptional initiation. Regulates gene expression via histone H2A deubiquitination. Deubiquitinates BAZ2A/TIP5 leading to its stabilization. Also capable of removing NEDD8 from NEDD8 conjugates but has no effect on Sentrin-1 conjugates. Also acts as a negative regulator of the ribosome quality control (RQC) by mediating deubiquitination of 40S ribosomal proteins RPS10/eS10 and RPS20/uS10, thereby antagonizing ZNF598-mediated 40S ubiquitination. The protein is Ubiquitin carboxyl-terminal hydrolase 21 (Usp21) of Rattus norvegicus (Rat).